The sequence spans 349 residues: tRNA pseudouridine synthase D (349 aa).

Residue Phe-27 coordinates substrate. Asp-80 functions as the Nucleophile in the catalytic mechanism. Substrate is bound at residue Asn-129. A TRUD domain is found at 155-303; sequence GVPNYFGAQR…VEAARRAMLL (149 aa). Phe-329 provides a ligand contact to substrate.

Belongs to the pseudouridine synthase TruD family.

The catalysed reaction is uridine(13) in tRNA = pseudouridine(13) in tRNA. Its function is as follows. Responsible for synthesis of pseudouridine from uracil-13 in transfer RNAs. This chain is tRNA pseudouridine synthase D, found in Shigella flexneri.